A 131-amino-acid polypeptide reads, in one-letter code: Glycine cleavage system H protein (131 aa).

The Lipoyl-binding domain occupies Arg-24–Glu-106. At Lys-65 the chain carries N6-lipoyllysine.

The protein belongs to the GcvH family. In terms of assembly, the glycine cleavage system is composed of four proteins: P, T, L and H. Requires (R)-lipoate as cofactor.

In terms of biological role, the glycine cleavage system catalyzes the degradation of glycine. The H protein shuttles the methylamine group of glycine from the P protein to the T protein. This is Glycine cleavage system H protein from Xylella fastidiosa (strain Temecula1 / ATCC 700964).